The primary structure comprises 111 residues: WAP four-disulfide core domain protein 12 (111 aa).

The first 23 residues, 1-23 (MGSSSFLVLMVSLVLVTLVAVEG), serve as a signal peptide directing secretion. One can recognise a WAP domain in the interval 27-74 (GIEKAGVCPADNVRCFKSDPPQCHTDQDCLGERKCCYLHCGFKCVIPV). Disulfide bonds link Cys-34–Cys-62, Cys-41–Cys-66, Cys-49–Cys-61, and Cys-55–Cys-70. The disordered stretch occupies residues 80 to 111 (GGNKDEDVSRPYPEPGWEAKCPGSSSTRCPQK). Residues 102–111 (GSSSTRCPQK) are compositionally biased toward polar residues.

In terms of tissue distribution, highly expressed in prostate, skin, lung and esophagus. Weakly expressed in skeletal muscle, epididymis, kidney, trachea, salivary gland, testis and seminal vesicle.

Its subcellular location is the secreted. Its function is as follows. Antibacterial protein. Putative acid-stable proteinase inhibitor. The chain is WAP four-disulfide core domain protein 12 (WFDC12) from Homo sapiens (Human).